The sequence spans 219 residues: Probable GTP-binding protein EngB (219 aa).

Residues 33 to 217 (GPLEIAFAGR…RAAICETVGH (185 aa)) enclose the EngB-type G domain. GTP-binding positions include 41–48 (GRSNVGKS), 68–72 (GRTQE), 95–98 (DMPG), 162–165 (TKTD), and 196–198 (TSS). The Mg(2+) site is built by Ser-48 and Thr-70.

Belongs to the TRAFAC class TrmE-Era-EngA-EngB-Septin-like GTPase superfamily. EngB GTPase family. Mg(2+) serves as cofactor.

Its function is as follows. Necessary for normal cell division and for the maintenance of normal septation. The sequence is that of Probable GTP-binding protein EngB from Allorhizobium ampelinum (strain ATCC BAA-846 / DSM 112012 / S4) (Agrobacterium vitis (strain S4)).